Here is a 313-residue protein sequence, read N- to C-terminus: Esterase mpl1 (313 aa).

Residues Ser-174, Asp-259, and His-287 each act as charge relay system in the active site.

The protein belongs to the LovG family.

It functions in the pathway mycotoxin biosynthesis. Functionally, esterase; part of the gene cluster that mediates the biosynthesis of the mycotoxin citrinin, a hepato-nephrotoxic compound to humans due to inhibition of respiration complex III. The pathway begins with the synthesis of a keto-aldehyde intermediate by the citrinin PKS (pksCT) from successive condensations of 4 malonyl-CoA units, presumably with a simple acetyl-CoA starter unit. Release of the keto-aldehyde intermediate is consistent with the presence of the C-terminal reductive release domain. Mp11 collaborates with pksCT by catalyzing the hydrolysis of ACP-bound acyl intermediates to free the ACP from stalled intermediates. Mpl2 then catalyzes the oxidation of the C-12 methyl of the ketone intermediate to an alcohol intermediate which is further oxidized by the oxidoreductase mpl7 to produce a bisaldehyde intermediate. The fourth catalytic step is catalyzed by the mpl4 aldehyde dehydrogenase. The final transformation is the reduction of C-3 by mpl6 to provide the chemically stable citrinin nucleus. This Monascus purpureus (Red mold) protein is Esterase mpl1.